The chain runs to 743 residues: Merozoite surface protein 9 (743 aa).

The signal sequence occupies residues 1–23; the sequence is MMNMKIVLFSLLLFVIRWNIISC. Residues 77-235 are interaction with MSP1 and host SLC4A1/Band 3; sequence KELLKEKQYT…VNDEDDVNDE (159 aa). 4 disordered regions span residues 202–282, 459–487, 512–540, and 666–743; these read KSQG…ATAY, DNQA…PTED, NNTP…ENFD, and VDAL…EESK. The segment covering 211–224 has biased composition (polar residues); sequence SQNQNENNDNQKYQ. 8 repeat units span residues 226–231, 232–237, 238–243, 244–249, 250–255, 256–261, 262–267, and 268–273. Residues 226 to 273 form an 8 X 6 AA tandem repeats of [VT]-N-D-[ED]-[ED]-D region; sequence VNDEDDVNDEEDTNDDEDTNDEEDTNDDEDTNDDEDTNDEEDTNDEED. Residues 226-274 are compositionally biased toward acidic residues; sequence VNDEDDVNDEEDTNDDEDTNDEEDTNDDEDTNDDEDTNDEEDTNDEEDH. The interval 364–528 is interaction with MSP1 and host SLC4A1/Band 3; that stretch reads LKDNLINYEF…PPTQSKKKNK (165 aa). The segment covering 459-473 has biased composition (basic and acidic residues); it reads DNQAVDTKSMEEPKV. Low complexity predominate over residues 512 to 521; sequence NNTPNVVPPT. The stretch at 644–733 forms a coiled coil; the sequence is NQETEEEMEK…QEEEEEEEIV (90 aa). The segment covering 672–721 has biased composition (basic and acidic residues); it reads KNKEEEEKEKEKEEKEKEEKEKEKEEKEKEEKEKEEKEKEEKEEEKKEKE. The span at 722-733 shows a compositional bias: acidic residues; it reads EEQEEEEEEEIV.

It belongs to the plasmodium ABRA family. In terms of assembly, forms a complex composed of MSP1, MSP6, MSP7, MSP9 and MSP3; within the complex, MSP6 and MSP9 mediate the binding to the host erythrocyte. Interacts with MSP1 subunits p19 and p42; the interaction is direct. Interacts with host SLC4A1/Band 3 protein (via the 5ABC region). MSP1 subunits p19 or p42, and MSP9 form a co-ligand complex that interacts with host SLC4A1/Band 3 protein. Post-translationally, not glycosylated.

The protein localises to the cell membrane. It is found in the parasitophorous vacuole lumen. The protein resides in the secreted. Functionally, during the asexual blood stage, involved in the sialic acid-independent (SAID) merozoite invasion of host erythrocytes by binding to host SLC4A1/Band 3 protein on the surface of the host erythrocyte. In Plasmodium falciparum (isolate 3D7), this protein is Merozoite surface protein 9.